The following is a 722-amino-acid chain: Mesentericin-Y105 transport/processing ATP-binding protein MesD (722 aa).

A Peptidase C39 domain is found at 16-143; sequence QVDERDCGVA…EEWTGVSIFI (128 aa). C22 is a catalytic residue. 8 consecutive transmembrane segments (helical) span residues 171-191, 210-230, 242-262, 287-307, 311-331, 401-421, 429-449, and 518-538; these read LLVINIVIAALLVTLVSILGS, LGIVSLGLIFAYVIQQLLSYA, LSIDIILSYIKHIFELPMSFF, TMLSVFLDLGILVIVGTVLVV, TLFLISLIAIPAYALVVWLFM, SLLQLSLNVVILWVGAQLVMT, LITYNALLGFFTDPLQNIINL, and IALVGISGSGKSTLVKLLVNF. Positions 173–455 constitute an ABC transmembrane type-1 domain; that stretch reads VINIVIAALL…IINLQTKLQQ (283 aa). One can recognise an ABC transporter domain in the interval 489–722; it reads LVADHITYKY…GGFYASLFNH (234 aa). 522-529 is an ATP binding site; the sequence is GISGSGKS.

The protein belongs to the ABC transporter superfamily.

Its subcellular location is the cell membrane. Its function is as follows. Involved in the export process of the bacteriocin mesentericin-Y105. The chain is Mesentericin-Y105 transport/processing ATP-binding protein MesD (mesD) from Leuconostoc mesenteroides.